Consider the following 856-residue polypeptide: Translation initiation factor IF-2 (856 aa).

A tr-type G domain is found at 356 to 526 (PRAPVVTVMG…LLIADLLELK (171 aa)). Residues 365-372 (GHVDHGKT) form a G1 region. 365–372 (GHVDHGKT) is a GTP binding site. Residues 390–394 (GITQH) form a G2 region. Residues 412 to 415 (DTPG) form a G3 region. GTP contacts are provided by residues 412–416 (DTPGH) and 466–469 (NKID). Residues 466-469 (NKID) form a G4 region. The interval 502–504 (SAK) is G5.

This sequence belongs to the TRAFAC class translation factor GTPase superfamily. Classic translation factor GTPase family. IF-2 subfamily.

The protein resides in the cytoplasm. Its function is as follows. One of the essential components for the initiation of protein synthesis. Protects formylmethionyl-tRNA from spontaneous hydrolysis and promotes its binding to the 30S ribosomal subunits. Also involved in the hydrolysis of GTP during the formation of the 70S ribosomal complex. This is Translation initiation factor IF-2 from Ehrlichia ruminantium (strain Welgevonden).